Reading from the N-terminus, the 63-residue chain is Large ribosomal subunit protein uL29 (63 aa).

The protein belongs to the universal ribosomal protein uL29 family.

In Pseudomonas fluorescens (strain ATCC BAA-477 / NRRL B-23932 / Pf-5), this protein is Large ribosomal subunit protein uL29.